We begin with the raw amino-acid sequence, 517 residues long: MGNCLTTQKGEPDKPADRIKLDDPPTIGVGVGVPQIPMPSHAGQPPEQIRPVPQIPESETAGANAKIFVALYDYDARTDEDLSFRKGEHLEILNDTQGDWWLARSKKTRSEGYIPSNYVAKLKSIEAEPWYFRKIKRIEAEKKLLLPENEHGAFLIRDSESRHNDYSLSVRDGDTVKHYRIRQLDEGGFFIARRTTFRTLQELVEHYSKDSDGLCVNLCKPCVQIEKPVTEGLSHRTRDQWEIDRTSLKFVRKLGSGQFGDVWEGLWNNTTPVAIKTLKSGTMDPKDFLAEAQIMKKLRHTKLIQLYAVCTVEEPIYIITELMKHGSLLEYLQAIAGKGRSLKMQTLIDMAAQIAAGMAYLESQNYIHRDLAARNVLVGDGNIVKIADFGLARLIKEDEYEARVGARFPIKWTAPEAANYSKFSIKSDVWSFGILLTELVTYGRIPYPGMTNAEVLTQVEHGYRMPQPPNCEPRLYEIMLECWHKDPMRRPTFETLQWKLEDFYTSDQSDYKEAQAY.

Residues 1 to 47 (MGNCLTTQKGEPDKPADRIKLDDPPTIGVGVGVPQIPMPSHAGQPPE) are disordered. Over residues 10-23 (GEPDKPADRIKLDD) the composition is skewed to basic and acidic residues. In terms of domain architecture, SH3 spans 63-124 (ANAKIFVALY…PSNYVAKLKS (62 aa)). The SH2 domain occupies 130 to 222 (WYFRKIKRIE…GLCVNLCKPC (93 aa)). Residues 248–504 (LKFVRKLGSG…TLQWKLEDFY (257 aa)) form the Protein kinase domain. Residues 254–262 (LGSGQFGDV) and Lys276 each bind ATP. Asp370 (proton acceptor) is an active-site residue.

The protein belongs to the protein kinase superfamily. Tyr protein kinase family. SRC subfamily. As to expression, ubiquitous in early embryos, in stages 13-16 expression is seen in visceral mesoderm, hindgut, brain, anal pads and ventral ganglions. In larvae, expression is in CNS, wing disk, leg disk and photoreceptor precursors in the eye-antenna disks posterior to the morphogenetic furrow.

The catalysed reaction is L-tyrosyl-[protein] + ATP = O-phospho-L-tyrosyl-[protein] + ADP + H(+). In terms of biological role, required directly or indirectly for the phosphorylation of drpr which is necessary for the interaction of drpr with shark and subsequent glial phagocytic activity. Together with drpr and shark, promotes the migration of macrophages to sites of wounding as part of a signaling cascade where Src42A detects production of hydrogen peroxide at wound sites which triggers phosphorylation of drpr and subsequent recruitment and activation of shark. Essential for correct eye morphogenesis (ommatidial R7 neuron formation) which requires the Ras1/MAPK signal transduction pathway. May be involved in the regulation of cytoskeleton organization and cell-cell contacts in developing ommatidia. Involved in phosphorylation of Dscam1, a cell surface receptor involved in targeting of growing axons during eye morphogenesis, and its interaction partner the SH2/SH3 adapter protein dock/dreadlocks. During embryogenesis, involved in regulation of dorsal closure where it may have a role in activating the JNK pathway in leading edge cells during this process. This is Tyrosine-protein kinase Src42A from Drosophila melanogaster (Fruit fly).